A 315-amino-acid polypeptide reads, in one-letter code: Ornithine carbamoyltransferase, anabolic (315 aa).

Residues 57 to 60 (STRT), Gln84, Arg108, and 135 to 138 (HPCQ) contribute to the carbamoyl phosphate site. L-ornithine-binding positions include Asn166, Asp230, and 234–235 (SM). Carbamoyl phosphate contacts are provided by residues 270–271 (CL) and Arg298.

It belongs to the aspartate/ornithine carbamoyltransferase superfamily. OTCase family. In terms of assembly, homododecamer (tetramer of trimers).

It localises to the cytoplasm. It catalyses the reaction carbamoyl phosphate + L-ornithine = L-citrulline + phosphate + H(+). Its pathway is amino-acid biosynthesis; L-arginine biosynthesis; L-arginine from L-ornithine and carbamoyl phosphate: step 1/3. Its activity is regulated as follows. Inhibited by the bisubstrate delta-N-phosphonoacetyl-L-ornithine (PALO). Functionally, reversibly catalyzes the transfer of the carbamoyl group from carbamoyl phosphate (CP) to the N(epsilon) atom of ornithine (ORN) to produce L-citrulline, which is a substrate for argininosuccinate synthetase, the enzyme involved in the final step in arginine biosynthesis. In Pyrococcus furiosus (strain ATCC 43587 / DSM 3638 / JCM 8422 / Vc1), this protein is Ornithine carbamoyltransferase, anabolic.